Here is a 637-residue protein sequence, read N- to C-terminus: Chaperone protein HtpG (637 aa).

Positions 1 to 345 (MSQQETHGFQ…SNDLPLNVSR (345 aa)) are a; substrate-binding. The interval 346-562 (EILQDNHITK…EGEMSTQMIK (217 aa)) is b. Residues 563-637 (LMQAAGQPVP…MNQMLLANLK (75 aa)) form a c region.

This sequence belongs to the heat shock protein 90 family. As to quaternary structure, homodimer.

It localises to the cytoplasm. Functionally, molecular chaperone. Has ATPase activity. The protein is Chaperone protein HtpG of Shewanella oneidensis (strain ATCC 700550 / JCM 31522 / CIP 106686 / LMG 19005 / NCIMB 14063 / MR-1).